A 256-amino-acid chain; its full sequence is Indole-3-glycerol phosphate synthase (256 aa).

This sequence belongs to the TrpC family.

It catalyses the reaction 1-(2-carboxyphenylamino)-1-deoxy-D-ribulose 5-phosphate + H(+) = (1S,2R)-1-C-(indol-3-yl)glycerol 3-phosphate + CO2 + H2O. Its pathway is amino-acid biosynthesis; L-tryptophan biosynthesis; L-tryptophan from chorismate: step 4/5. In Pelodictyon phaeoclathratiforme (strain DSM 5477 / BU-1), this protein is Indole-3-glycerol phosphate synthase.